Consider the following 277-residue polypeptide: Phosphate import ATP-binding protein PstB (277 aa).

One can recognise an ABC transporter domain in the interval 31–272 (IEVPGLSLFY…PAKKQTEDYI (242 aa)). 63–70 (GPSGCGKS) lines the ATP pocket.

Belongs to the ABC transporter superfamily. Phosphate importer (TC 3.A.1.7) family. In terms of assembly, the complex is composed of two ATP-binding proteins (PstB), two transmembrane proteins (PstC and PstA) and a solute-binding protein (PstS).

It localises to the cell inner membrane. The enzyme catalyses phosphate(out) + ATP + H2O = ADP + 2 phosphate(in) + H(+). Functionally, part of the ABC transporter complex PstSACB involved in phosphate import. Responsible for energy coupling to the transport system. The chain is Phosphate import ATP-binding protein PstB from Pseudomonas putida (Arthrobacter siderocapsulatus).